Here is a 391-residue protein sequence, read N- to C-terminus: Putative neutrophil cytosol factor 1B (391 aa).

In terms of domain architecture, PX spans Met1 to Leu126. SH3 domains follow at residues Ile157–Ser216 and Tyr227–Gln286. Positions Gln286–Val391 are disordered. A phosphoserine mark is found at Ser304 and Ser305. Residues His310–Arg319 are compositionally biased toward basic residues. Phosphoserine is present on residues Ser321, Ser329, Ser346, and Ser349.

It is found in the cytoplasm. Functionally, may be required for activation of the latent NADPH oxidase (necessary for superoxide production). The sequence is that of Putative neutrophil cytosol factor 1B (NCF1B) from Homo sapiens (Human).